The sequence spans 466 residues: Amidase (466 aa).

Active-site charge relay system residues include lysine 79 and serine 148. The tract at residues 128-152 is disordered; the sequence is YGRITPKSRNPRDPGRTPGGSSGGS. Catalysis depends on serine 172, which acts as the Acyl-ester intermediate.

Belongs to the amidase family.

The enzyme catalyses a monocarboxylic acid amide + H2O = a monocarboxylate + NH4(+). This chain is Amidase, found in Pseudomonas putida (Arthrobacter siderocapsulatus).